The primary structure comprises 177 residues: Calerythrin (177 aa).

EF-hand domains lie at 5–40 (IASD…IAEA), 45–90 (AGAA…NLIF), 100–134 (VLGP…ALGM), and 134–169 (MSKA…FHFG). Ca(2+) contacts are provided by Asp-18, Asp-20, Asn-22, and Asp-29. Residues Asp-113, Asn-115, Asp-117, Gln-119, Glu-124, Asp-147, Asn-149, Asn-151, Glu-153, and Glu-158 each contribute to the Ca(2+) site.

The sequence is that of Calerythrin from Saccharopolyspora erythraea (Streptomyces erythraeus).